The sequence spans 24 residues: Cupiennin-5a (24 aa).

As to expression, expressed by the venom gland.

It localises to the secreted. The polypeptide is Cupiennin-5a (Cupiennius salei (American wandering spider)).